A 313-amino-acid chain; its full sequence is Malate dehydrogenase (313 aa).

Residues 8–13 (GAGNVG) and Asp33 each bind NAD(+). The substrate site is built by Arg83 and Arg89. Residues Asn96 and 119 to 121 (ISN) each bind NAD(+). Asn121 and Arg152 together coordinate substrate. His176 functions as the Proton acceptor in the catalytic mechanism.

This sequence belongs to the LDH/MDH superfamily. MDH type 3 family.

It carries out the reaction (S)-malate + NAD(+) = oxaloacetate + NADH + H(+). Catalyzes the reversible oxidation of malate to oxaloacetate. This Bacteroides thetaiotaomicron (strain ATCC 29148 / DSM 2079 / JCM 5827 / CCUG 10774 / NCTC 10582 / VPI-5482 / E50) protein is Malate dehydrogenase.